Here is a 536-residue protein sequence, read N- to C-terminus: Lariat debranching enzyme (536 aa).

A divalent metal cation contacts are provided by C8, H10, D39, and N84. The lariat recognition loop stretch occupies residues 124–154 (SGIFKSHDYRKGHFECPPYNQQTIRSAYHVR). A divalent metal cation is bound by residues H174, H226, and H228. The tract at residues 388-536 (EEGSVRGEYE…YAAEDEDEAK (149 aa)) is disordered. Residues 414–426 (EYNTDNSGLSSIN) show a composition bias toward polar residues. Positions 430 to 441 (IMLDDEGGDEDL) are enriched in acidic residues. Residues 484–504 (ELEKSGVNKQVEEKSLNERPL) are compositionally biased toward basic and acidic residues.

The protein belongs to the lariat debranching enzyme family. Fe(2+) is required as a cofactor. Zn(2+) serves as cofactor. The cofactor is Mn(2+).

Its subcellular location is the nucleus. Active in presence of diverse metals including Fe(2+), Zn(2+), Mn(2+). Also activated by Ca(2+). Binds two metal cations in two adjacent alpha and beta metal-binding pockets. Cleaves the 2'-5' phosphodiester linkage at the branch point of excised lariat intron RNA and converts them into linear molecules that can be subsequently degraded, thereby facilitating ribonucleotide turnover. Linked to its role in pre-mRNA processing mechanism, may also participate in retrovirus replication and have an antiviral cell-intrinsic defense function. The sequence is that of Lariat debranching enzyme (DBR1) from Gallus gallus (Chicken).